We begin with the raw amino-acid sequence, 1647 residues long: Ras GTPase-activating-like protein IQG1 (1647 aa).

The tract at residues 18 to 51 is disordered; it reads DTTATTTTTTTSNVLQPSNRLNSPTKFNRKSLDN. Over residues 19 to 28 the composition is skewed to low complexity; it reads TTATTTTTTT. Over residues 29 to 43 the composition is skewed to polar residues; sequence SNVLQPSNRLNSPTK. The residue at position 48 (S48) is a Phosphoserine. Phosphothreonine occurs at positions 66, 72, and 82. S83, S91, and S139 each carry phosphoserine. Polar residues predominate over residues 143 to 162; it reads FNTQSNVHTPLKQLNQPIGT. Positions 143–175 are disordered; that stretch reads FNTQSNVHTPLKQLNQPIGTPSSSSLSPAKNAS. Residues 163 to 175 show a composition bias toward low complexity; the sequence is PSSSSLSPAKNAS. 3 positions are modified to phosphoserine: S165, S167, and S169. A Calponin-homology (CH) domain is found at 184–291; it reads LCRIEAIKQW…FCLHALSYIL (108 aa). The tract at residues 326–427 is disordered; the sequence is PLPNFSSADT…STSNAKLELH (102 aa). The span at 342–355 shows a compositional bias: low complexity; it reads TSNNNSSTTSATAA. T367 carries the post-translational modification Phosphothreonine. A compositionally biased stretch (low complexity) spans 368–379; the sequence is PSPLKRPQQLQK. Residue S369 is modified to Phosphoserine. Composition is skewed to basic and acidic residues over residues 380–392 and 402–413; these read KQLE…KPEL and ISRDDPFTDRVD. Phosphoserine occurs at positions 433 and 440. IQ domains follow at residues 467-478, 528-539, 556-567, 586-597, 616-627, 642-653, 672-683, 734-745, and 764-775; these read FQSLARGAVFRY, LQSIIRKNFVIN, LQSLIRGKLTRD, FQSLVRMKSIYS, LQSIARSQLYHR, IQSIIRRNAVIE, LQSIARGGVART, VQTLFRGVLSRY, and LQSVARGKLMRG. Positions 841-919 form a coiled coil; it reads LSDLKDLIIE…KKIELWQTLF (79 aa). A Ras-GAP domain is found at 958–1223; the sequence is PVRDSSITYH…DTVKSIISQA (266 aa). Phosphoserine is present on residues S1064, S1068, S1088, S1383, and S1385.

As to quaternary structure, interacts with myosin MYO1 and its light chain MLC1. Interacts with BNI1. Interacts with BNR1. Interacts with CLB2. Interacts with CLB4. Interacts with CDC28. In terms of processing, hyperphosphorylated. Phosphorylation is cell cycle-dependent and peaks at the time of cytokinesis. Contains 21 consensus sites for cyclin-dependent kinases (CDKs). At least some of them are phosphorylated by the CLB2-CDC28 kinase complex. Mutation of 15 of the phosphorylation sites to Ala caused both premature assembly and delayed disassembly of the actomyosin ring, blocked interaction with the actin-nucleating proteins BNI1 and BNR1, and resulted in defects in cytokinesis.

The protein resides in the bud neck. Functionally, required for the assembly and the contraction of the actomyosin ring at the bud neck during cytokinesis. The protein is Ras GTPase-activating-like protein IQG1 (IQG1) of Candida albicans (strain SC5314 / ATCC MYA-2876) (Yeast).